The primary structure comprises 206 residues: Endoplasmic reticulum transmembrane protein 1 (206 aa).

The Lumenal segment spans residues 1-7 (MSLYFTT). Residues 8-28 (LFLLLTVEMVMLFIFVLPLPF) traverse the membrane as a helical segment. Residues 29 to 45 (RIRRGIFSTYNQLTAKQ) lie on the Cytoplasmic side of the membrane. Residues 46–66 (QIKTIIFITGCLVGLLFIDSW) traverse the membrane as a helical segment. The Lumenal portion of the chain corresponds to 67 to 104 (KRSQIRVSLYHNDNSGSIGSSAVTPIQALASRAYNQRN). A helical membrane pass occupies residues 105 to 125 (MYISGFILYFSICIPTVMSIV). Topologically, residues 126–206 (KRLVKYQGLI…AAAEASKKGN (81 aa)) are cytoplasmic. The segment at 140 to 163 (KQKLNKPSSNSKKDSNEADSTKLQ) is disordered. Residues 150-163 (SKKDSNEADSTKLQ) show a composition bias toward basic and acidic residues. Lys-190 is covalently cross-linked (Glycyl lysine isopeptide (Lys-Gly) (interchain with G-Cter in ubiquitin)). Positions 203 to 206 (KKGN) match the Di-lysine motif motif.

This sequence belongs to the BCAP29/BCAP31 family.

It localises to the endoplasmic reticulum membrane. Functionally, may play a role in anterograde transport of membrane proteins from the endoplasmic reticulum to the Golgi. The protein is Endoplasmic reticulum transmembrane protein 1 (YET1) of Saccharomyces cerevisiae (strain ATCC 204508 / S288c) (Baker's yeast).